The primary structure comprises 414 residues: Riboflavin biosynthesis protein RibBA (414 aa).

The segment at 1 to 204 is DHBP synthase; it reads MTRFDTIERA…IADMIAWRRK (204 aa). D-ribulose 5-phosphate is bound by residues 28–29, D33, 141–145, and E165; these read RE and RPGHT. E29 lines the Mg(2+) pocket. H144 contacts Mg(2+). Residues 205–414 are GTP cyclohydrolase II; it reads HEKQVVRVAE…DDLDLGETAQ (210 aa). 255–259 contributes to the GTP binding site; that stretch reads RVHSE. The Zn(2+) site is built by C260, C271, and C273. Residues Q276, 299-301, and T321 each bind GTP; that span reads EGR. The Proton acceptor; for GTP cyclohydrolase activity role is filled by D333. The Nucleophile; for GTP cyclohydrolase activity role is filled by R335. GTP contacts are provided by T356 and K361.

The protein in the N-terminal section; belongs to the DHBP synthase family. This sequence in the C-terminal section; belongs to the GTP cyclohydrolase II family. The cofactor is Mg(2+). Mn(2+) is required as a cofactor. Zn(2+) serves as cofactor.

The enzyme catalyses D-ribulose 5-phosphate = (2S)-2-hydroxy-3-oxobutyl phosphate + formate + H(+). The catalysed reaction is GTP + 4 H2O = 2,5-diamino-6-hydroxy-4-(5-phosphoribosylamino)-pyrimidine + formate + 2 phosphate + 3 H(+). It functions in the pathway cofactor biosynthesis; riboflavin biosynthesis; 2-hydroxy-3-oxobutyl phosphate from D-ribulose 5-phosphate: step 1/1. The protein operates within cofactor biosynthesis; riboflavin biosynthesis; 5-amino-6-(D-ribitylamino)uracil from GTP: step 1/4. Its function is as follows. Catalyzes the conversion of D-ribulose 5-phosphate to formate and 3,4-dihydroxy-2-butanone 4-phosphate. Catalyzes the conversion of GTP to 2,5-diamino-6-ribosylamino-4(3H)-pyrimidinone 5'-phosphate (DARP), formate and pyrophosphate. This chain is Riboflavin biosynthesis protein RibBA, found in Nocardia farcinica (strain IFM 10152).